The primary structure comprises 377 residues: Sodium-dependent organic anion transporter (377 aa).

The Extracellular portion of the chain corresponds to 1-29; the sequence is MRANCSSGLACPANSSEEELPEGLKAFGN. N-linked (GlcNAc...) asparagine glycosylation occurs at N4. Residues 30 to 50 form a helical membrane-spanning segment; it reads LDLVFTVVSALMIGLLMFSLG. The Cytoplasmic portion of the chain corresponds to 51–67; sequence CSVEVQKLWGHIRRPWG. A helical membrane pass occupies residues 68 to 88; that stretch reads IAVGMLCQFGLMPLIAYLLII. The Extracellular portion of the chain corresponds to 89 to 97; it reads SFSLKPLQA. The chain crosses the membrane as a helical span at residues 98–118; that stretch reads IAVLIMGCCPGGTVSNIFTFW. At 119-133 the chain is on the cytoplasmic side; that stretch reads VDGDMDLSISMTTCS. A helical membrane pass occupies residues 134–154; it reads TMAALGMMPLCLYLYTLSWNL. The Extracellular portion of the chain corresponds to 155 to 159; the sequence is EQNLT. N-linked (GlcNAc...) asparagine glycosylation occurs at N157. The chain crosses the membrane as a helical span at residues 160–180; it reads IPYQNIGITLVCLIIPVAFGI. Over 181 to 195 the chain is Cytoplasmic; it reads YVNYRWPKQSKIILK. A helical transmembrane segment spans residues 196 to 216; that stretch reads IGAIAGGLLFLVVTGAGMVLM. Residues 217–223 are Extracellular-facing; the sequence is KEFWSSD. The chain crosses the membrane as a helical span at residues 224-244; it reads IILLMISFIFPLIGHATGFLL. Topologically, residues 245-257 are cytoplasmic; sequence ALLTHQSWQRCRT. The helical transmembrane segment at 258 to 278 threads the bilayer; that stretch reads ISLETGTQNVQMCFTMLQLSF. The Extracellular segment spans residues 279–285; it reads TAEQLVQ. A helical transmembrane segment spans residues 286–306; sequence IFGFVLAYGLFQMLNGFFMVA. Over 307 to 377 the chain is Cytoplasmic; sequence AYKMYKRRLK…TPTGDIARAK (71 aa). The interval 319–377 is disordered; it reads HGNEKPSCQEARHRKKSTSPKETTAFLEVNEEATLSPGPSGPVDPHGAPTPTGDIARAK.

It belongs to the bile acid:sodium symporter (BASS) (TC 2.A.28) family. Post-translationally, glycosylated.

It localises to the membrane. It catalyses the reaction estrone 3-sulfate(out) + 2 Na(+)(out) = estrone 3-sulfate(in) + 2 Na(+)(in). It carries out the reaction 17beta-estradiol 3-sulfate(out) + 2 Na(+)(out) = 17beta-estradiol 3-sulfate(in) + 2 Na(+)(in). The catalysed reaction is dehydroepiandrosterone 3-sulfate(out) + 2 Na(+)(out) = dehydroepiandrosterone 3-sulfate(in) + 2 Na(+)(in). The enzyme catalyses androst-5-ene-diol 3-sulfate(out) + 2 Na(+)(out) = androst-5-ene-diol 3-sulfate(in) + 2 Na(+)(in). It catalyses the reaction pregnenolone sulfate(out) + 2 Na(+)(out) = pregnenolone sulfate(in) + 2 Na(+)(in). It carries out the reaction taurolithocholate 3-sulfate(out) + 2 Na(+)(out) = taurolithocholate 3-sulfate(in) + 2 Na(+)(in). The catalysed reaction is androsterone 3alpha-sulfate(out) + 2 Na(+)(out) = androsterone 3alpha-sulfate(in) + 2 Na(+)(in). The enzyme catalyses 5alpha-dihydrotestosterone sulfate(out) + 2 Na(+)(out) = 5alpha-dihydrotestosterone sulfate(in) + 2 Na(+)(in). It catalyses the reaction 17beta-estradiol 17-sulfate(out) + 2 Na(+)(out) = 17beta-estradiol 17-sulfate(in) + 2 Na(+)(in). It carries out the reaction 17alpha-hydroxypregnenolone 3-sulfate(out) + 2 Na(+)(out) = 17alpha-hydroxypregnenolone 3-sulfate(in) + 2 Na(+)(in). The catalysed reaction is epiandrosterone 3-sulfate(out) + 2 Na(+)(out) = epiandrosterone 3-sulfate(in) + 2 Na(+)(in). The enzyme catalyses epitestosterone 17-sulfate(out) + 2 Na(+)(out) = epitestosterone 17-sulfate(in) + 2 Na(+)(in). It catalyses the reaction testosterone 17-sulfate(out) + 2 Na(+)(out) = testosterone 17-sulfate(in) + 2 Na(+)(in). It carries out the reaction 16alpha-hydroxydehydroepiandrosterone 3-sulfate(out) + 2 Na(+)(out) = 16alpha-hydroxydehydroepiandrosterone 3-sulfate(in) + 2 Na(+)(in). In terms of biological role, transports sulfoconjugated steroid hormones from the extracellular compartment into the cytosol in a sodium-dependent manner without hydrolysis. Steroid sulfate hormones are commonly considered to be biologically inactive metabolites, that may be activated by steroid sulfatases into free steroids. May play an important role by delivering sulfoconjugated steroids to specific target cells in reproductive organs. May play a role transporting the estriol precursor 16alpha-hydroxydehydroepiandrosterone 3-sulfate (16a-OH-DHEAS) at the fetal blood vessel endothelium. Can also transport other sulfoconjugated molecules such as taurolithocholic acid-3-sulfate and sulfoconjugated pyrenes. The protein is Sodium-dependent organic anion transporter (SLC10A6) of Bos taurus (Bovine).